Here is a 388-residue protein sequence, read N- to C-terminus: Succinate--CoA ligase [ADP-forming] subunit beta (388 aa).

The region spanning Lys9–His244 is the ATP-grasp domain. ATP contacts are provided by residues Lys46, Gly53–Gly55, Glu99, Thr102, and Glu107. Mg(2+) is bound by residues Asn199 and Asp213. Residues Asn264 and Gly321–Val323 contribute to the substrate site.

This sequence belongs to the succinate/malate CoA ligase beta subunit family. As to quaternary structure, heterotetramer of two alpha and two beta subunits. Mg(2+) serves as cofactor.

It catalyses the reaction succinate + ATP + CoA = succinyl-CoA + ADP + phosphate. It carries out the reaction GTP + succinate + CoA = succinyl-CoA + GDP + phosphate. It participates in carbohydrate metabolism; tricarboxylic acid cycle; succinate from succinyl-CoA (ligase route): step 1/1. Its function is as follows. Succinyl-CoA synthetase functions in the citric acid cycle (TCA), coupling the hydrolysis of succinyl-CoA to the synthesis of either ATP or GTP and thus represents the only step of substrate-level phosphorylation in the TCA. The beta subunit provides nucleotide specificity of the enzyme and binds the substrate succinate, while the binding sites for coenzyme A and phosphate are found in the alpha subunit. This is Succinate--CoA ligase [ADP-forming] subunit beta from Yersinia pseudotuberculosis serotype O:1b (strain IP 31758).